A 176-amino-acid polypeptide reads, in one-letter code: 3-hydroxydecanoyl-[acyl-carrier-protein] dehydratase (176 aa).

The active site involves histidine 71.

It belongs to the thioester dehydratase family. FabA subfamily. As to quaternary structure, homodimer.

It localises to the cytoplasm. It catalyses the reaction a (3R)-hydroxyacyl-[ACP] = a (2E)-enoyl-[ACP] + H2O. It carries out the reaction (3R)-hydroxydecanoyl-[ACP] = (2E)-decenoyl-[ACP] + H2O. The enzyme catalyses (2E)-decenoyl-[ACP] = (3Z)-decenoyl-[ACP]. It participates in lipid metabolism; fatty acid biosynthesis. In terms of biological role, necessary for the introduction of cis unsaturation into fatty acids. Catalyzes the dehydration of (3R)-3-hydroxydecanoyl-ACP to E-(2)-decenoyl-ACP and then its isomerization to Z-(3)-decenoyl-ACP. Can catalyze the dehydratase reaction for beta-hydroxyacyl-ACPs with saturated chain lengths up to 16:0, being most active on intermediate chain length. The sequence is that of 3-hydroxydecanoyl-[acyl-carrier-protein] dehydratase from Rhodopseudomonas palustris (strain HaA2).